A 259-amino-acid polypeptide reads, in one-letter code: Deoxyribose-phosphate aldolase (259 aa).

The Proton donor/acceptor role is filled by Asp-102. Lys-167 serves as the catalytic Schiff-base intermediate with acetaldehyde. Lys-201 acts as the Proton donor/acceptor in catalysis.

Belongs to the DeoC/FbaB aldolase family. DeoC type 2 subfamily.

The protein localises to the cytoplasm. The catalysed reaction is 2-deoxy-D-ribose 5-phosphate = D-glyceraldehyde 3-phosphate + acetaldehyde. It functions in the pathway carbohydrate degradation; 2-deoxy-D-ribose 1-phosphate degradation; D-glyceraldehyde 3-phosphate and acetaldehyde from 2-deoxy-alpha-D-ribose 1-phosphate: step 2/2. Catalyzes a reversible aldol reaction between acetaldehyde and D-glyceraldehyde 3-phosphate to generate 2-deoxy-D-ribose 5-phosphate. The polypeptide is Deoxyribose-phosphate aldolase (Erwinia tasmaniensis (strain DSM 17950 / CFBP 7177 / CIP 109463 / NCPPB 4357 / Et1/99)).